Reading from the N-terminus, the 261-residue chain is Triosephosphate isomerase (261 aa).

10–12 (NWK) serves as a coordination point for substrate. H100 serves as the catalytic Electrophile. Catalysis depends on E172, which acts as the Proton acceptor. Substrate contacts are provided by residues G178, S218, and 239 to 240 (GG).

It belongs to the triosephosphate isomerase family. Homodimer.

Its subcellular location is the cytoplasm. It catalyses the reaction D-glyceraldehyde 3-phosphate = dihydroxyacetone phosphate. The protein operates within carbohydrate biosynthesis; gluconeogenesis. It functions in the pathway carbohydrate degradation; glycolysis; D-glyceraldehyde 3-phosphate from glycerone phosphate: step 1/1. Its function is as follows. Involved in the gluconeogenesis. Catalyzes stereospecifically the conversion of dihydroxyacetone phosphate (DHAP) to D-glyceraldehyde-3-phosphate (G3P). The chain is Triosephosphate isomerase from Mycolicibacterium vanbaalenii (strain DSM 7251 / JCM 13017 / BCRC 16820 / KCTC 9966 / NRRL B-24157 / PYR-1) (Mycobacterium vanbaalenii).